We begin with the raw amino-acid sequence, 2200 residues long: Non-reducing polyketide synthase tpeB (2200 aa).

One can recognise a Starter acyltransferase (SAT) domain in the interval F16–H255. Positions S382–E815 constitute a Ketosynthase family 3 (KS3) domain. Active-site for beta-ketoacyl synthase activity residues include C554, H690, and H729. The region spanning V914–L1202 is the Malonyl-CoA:ACP transacylase (MAT) domain. The tract at residues T1296–G1621 is product template (PT) domain. Residues Q1300–D1433 are N-terminal hotdog fold. Residues Q1300–T1617 enclose the PKS/mFAS DH domain. H1332 acts as the Proton acceptor; for dehydratase activity in catalysis. Residues N1462–T1617 are C-terminal hotdog fold. Residue D1522 is the Proton donor; for dehydratase activity of the active site. Positions D1625 to S1652 are disordered. Positions N1636 to T1650 are enriched in low complexity. Carrier domains are found at residues T1671–P1748 and A1791–T1865. An O-(pantetheine 4'-phosphoryl)serine mark is found at S1708 and S1825. Residues M1931–M2173 are thioesterase (TE) domain.

Pantetheine 4'-phosphate serves as cofactor.

The protein operates within secondary metabolite biosynthesis. Functionally, non-reducing polyketide synthase; part of the gene cluster that mediates the biosynthesis of polyesters containing 2,4-dihydroxy-6-(2-hydroxypropyl)benzoate and 3-hydroxybutyrate moieties, such as talapolyester G, 15G256beta and 15G256beta-2; as well as to oxidized derivatives such as 15G256alpha. The biosynthesis of the polyesters probably starts with the formation of the diketide 3-hydroxybutyryl-S-ACP catalyzed by the partially reducing polyketide synthase tpeA. The acceptance of 3-hydroxybutyryl by the non-reducing polyketide synthase tpeB would initiate further elongation and cyclization, catalyzed by KS and PT, respectively, to form 2,4-dihydroxy-6-(2-hydroxyn-propyl)benzoyl-S-ACP intermediate. The TE domain could catalyze lactonization at this step to yield 6-hydroxymellein as a derailment product. The polyesterification process maybe occurs when additional molecules of 3-hydroxybutyryl are transferred to tpeB. Following the first esterification step, an intramolecular cyclization catalyzed by the TE domain of tpeB would give talarodioxadione 1, whereas the ethyl esterification of talapolyester G perhaps happens spontaneously. Further oxidation by the cytochrome P450 monooxygenase tpeC then leads to the formation of oxidized derivatives. The protein is Non-reducing polyketide synthase tpeB of Talaromyces stipitatus (strain ATCC 10500 / CBS 375.48 / QM 6759 / NRRL 1006) (Penicillium stipitatum).